We begin with the raw amino-acid sequence, 372 residues long: Chemerin-like receptor 1 (372 aa).

The Extracellular segment spans residues 1–39 (MEYEGYNDSSIYGEEYSDGSDYIVDLEEAGPLEAKVAEV). N-linked (GlcNAc...) asparagine glycosylation is present at asparagine 7. Residues 40-62 (FLVVIYSLVCFLGILGNGLVIVI) form a helical membrane-spanning segment. Topologically, residues 63 to 73 (ATFKMKKTVNT) are cytoplasmic. A helical transmembrane segment spans residues 74-95 (VWFVNLAVADFLFNIFLPIHIT). Residues 96-112 (YAAMDYHWVFGKAMCKI) lie on the Extracellular side of the membrane. An intrachain disulfide couples cysteine 110 to cysteine 188. The chain crosses the membrane as a helical span at residues 113 to 133 (SSFLLSHNMYTSVFLLTVISF). Residues 134 to 152 (DRCISVLLPVWSQNHRSVR) are Cytoplasmic-facing. A helical membrane pass occupies residues 153–174 (LAYMTCVVVWVLAFFLSSPSLV). Over 175 to 223 (FRDTVSTSHGKITCFNNFSLAAPEPFSHSTHPRTDPVGYSRHVAVTVTR) the chain is Extracellular. Asparagine 191 is a glycosylation site (N-linked (GlcNAc...) asparagine). The helical transmembrane segment at 224–244 (FLCGFLIPVFIITACYLTIVF) threads the bilayer. Residues 245–260 (KLQRNRLAKTKKPFKI) are Cytoplasmic-facing. Residues 261–281 (IITIIITFFLCWCPYHTLYLL) traverse the membrane as a helical segment. The Extracellular segment spans residues 282-299 (ELHHTAVPASVFSLGLPL). A helical transmembrane segment spans residues 300-319 (ATAVAIANSCMNPILYVFMG). Residues 320–372 (HDFKKFKVALFSRLVNALSEDTGPSSYPSHRSFTKMSSLIEKASVNEKETSTL) lie on the Cytoplasmic side of the membrane. The residue at position 338 (serine 338) is a Phosphoserine. The residue at position 341 (threonine 341) is a Phosphothreonine. Serine 348, serine 351, and serine 357 each carry phosphoserine. Threonine 371 carries the phosphothreonine modification.

This sequence belongs to the chemokine-like receptor (CMKLR) family. In terms of tissue distribution, high expression in heart and lung, low in small intestines, colon, kidney, liver, uterus and brain.

The protein localises to the cell membrane. In terms of biological role, receptor for the chemoattractant adipokine chemerin/RARRES2 and for the omega-3 fatty acid derived molecule resolvin E1. Interaction with RARRES2 initiates activation of G proteins G(i)/G(o) and beta-arrestin pathways inducing cellular responses via second messenger pathways such as intracellular calcium mobilization, phosphorylation of MAP kinases MAPK1/MAPK3 (ERK1/2), TYRO3, MAPK14/P38MAPK and PI3K leading to multifunctional effects, like, reduction of immune responses, enhancing of adipogenesis and angionesis. Resolvin E1 down-regulates cytokine production in macrophages by reducing the activation of MAPK1/3 (ERK1/2) and NF-kappa-B. Positively regulates adipogenesis and adipocyte metabolism. The chain is Chemerin-like receptor 1 (Cmklr1) from Rattus norvegicus (Rat).